Consider the following 375-residue polypeptide: Anhydro-N-acetylmuramic acid kinase (375 aa).

12–19 serves as a coordination point for ATP; the sequence is GTSLDGVD.

This sequence belongs to the anhydro-N-acetylmuramic acid kinase family.

It carries out the reaction 1,6-anhydro-N-acetyl-beta-muramate + ATP + H2O = N-acetyl-D-muramate 6-phosphate + ADP + H(+). The protein operates within amino-sugar metabolism; 1,6-anhydro-N-acetylmuramate degradation. Its pathway is cell wall biogenesis; peptidoglycan recycling. In terms of biological role, catalyzes the specific phosphorylation of 1,6-anhydro-N-acetylmuramic acid (anhMurNAc) with the simultaneous cleavage of the 1,6-anhydro ring, generating MurNAc-6-P. Is required for the utilization of anhMurNAc either imported from the medium or derived from its own cell wall murein, and thus plays a role in cell wall recycling. The polypeptide is Anhydro-N-acetylmuramic acid kinase (Mannheimia succiniciproducens (strain KCTC 0769BP / MBEL55E)).